A 117-amino-acid polypeptide reads, in one-letter code: MPRAVNGTIHKNRRRRVLKDAKGFRGARSKLYRTAKSAVMKAGQWAYRDRRAKKRDFRKLWIIRINAAARENGLSYSVFMNSLKKLGINMDRKSLAELAFNDREVFNALVEKIKVAG.

The protein belongs to the bacterial ribosomal protein bL20 family.

In terms of biological role, binds directly to 23S ribosomal RNA and is necessary for the in vitro assembly process of the 50S ribosomal subunit. It is not involved in the protein synthesizing functions of that subunit. This chain is Large ribosomal subunit protein bL20, found in Leptospira borgpetersenii serovar Hardjo-bovis (strain JB197).